Consider the following 118-residue polypeptide: Heavy metal-associated isoprenylated plant protein 12 (118 aa).

The HMA domain maps to 1 to 65 (MQVVVLKLDV…KICHTEFISV (65 aa)). The segment at 68–87 (VKEPEKKKPDDPKKPETKPP) is disordered. Basic and acidic residues predominate over residues 69-86 (KEPEKKKPDDPKKPETKP). A Cysteine methyl ester modification is found at Cys-115. Cys-115 carries the S-farnesyl cysteine lipid modification. A propeptide spans 116–118 (VTS) (removed in mature form).

This sequence belongs to the HIPP family.

In terms of biological role, probable heavy-metal-binding protein. The polypeptide is Heavy metal-associated isoprenylated plant protein 12 (Arabidopsis thaliana (Mouse-ear cress)).